Here is a 1217-residue protein sequence, read N- to C-terminus: WD repeat-containing protein on Y chromosome (1217 aa).

WD repeat units follow at residues 155–199 (EDMT…LRSA), 323–362 (RIPL…EPSA), 366–405 (GHNG…LLQT), 456–495 (THAA…RKII), 508–547 (TIDI…VVRN), 595–635 (FHTD…RRYN), 740–779 (KVGD…IPEA), and 823–862 (GHLK…LGTL). 2 disordered regions span residues 910–929 (QVKR…VEDT) and 1033–1217 (AGGQ…KDKP). Residues 919–929 (EREDEGEVEDT) show a composition bias toward acidic residues. Composition is skewed to polar residues over residues 1041–1054 (RASS…TNSI), 1085–1107 (FGPN…SQLK), and 1137–1179 (PVST…TSAN). Positions 1181–1190 (KPDIMPVKIK) are enriched in low complexity. Over residues 1198-1210 (RNTAPVQITTSIA) the composition is skewed to polar residues.

This chain is WD repeat-containing protein on Y chromosome, found in Drosophila mojavensis (Fruit fly).